The sequence spans 205 residues: Small ribosomal subunit protein bS16 (205 aa).

The interval 110-205 (GEEVKIAVGT…ADDNEEPEDE (96 aa)) is disordered. A compositionally biased stretch (basic and acidic residues) spans 123–132 (DPLERERERA). The segment covering 153–205 (EETEAEEAEDVETADAEDADAASETDEPEAAADEADETDASADADDNEEPEDE) has biased composition (acidic residues).

It belongs to the bacterial ribosomal protein bS16 family.

This is Small ribosomal subunit protein bS16 from Salinibacter ruber (strain DSM 13855 / M31).